A 45-amino-acid chain; its full sequence is Large ribosomal subunit protein bL34 (45 aa).

Belongs to the bacterial ribosomal protein bL34 family.

The sequence is that of Large ribosomal subunit protein bL34 from Kocuria rhizophila (strain ATCC 9341 / DSM 348 / NBRC 103217 / DC2201).